Consider the following 162-residue polypeptide: MDEAYYSGNLESVLGYVSDMHTELASISQLVIAKIETIDNDILNKDIVNFIMCRSNLDNPFISFLDTVYTIIDQENYQTELINSLDDNEIIDCIVNKFMSFYKDNLENIVDAIITLKYIMNNPDFKTTYAEVLGSRIADIDIKQVIRKNILQLSNDIRERYL.

Belongs to the poxviridae A49 protein family.

This is Protein A49 from Homo sapiens (Human).